Consider the following 628-residue polypeptide: tRNA uridine 5-carboxymethylaminomethyl modification enzyme MnmG (628 aa).

Residues 14–19 (GAGHAG), Val126, and Ser181 contribute to the FAD site. Position 273 to 287 (273 to 287 (GPRYCPSIEDKVVRF)) interacts with NAD(+). Gln370 serves as a coordination point for FAD.

The protein belongs to the MnmG family. Homodimer. Heterotetramer of two MnmE and two MnmG subunits. Requires FAD as cofactor.

It localises to the cytoplasm. NAD-binding protein involved in the addition of a carboxymethylaminomethyl (cmnm) group at the wobble position (U34) of certain tRNAs, forming tRNA-cmnm(5)s(2)U34. The sequence is that of tRNA uridine 5-carboxymethylaminomethyl modification enzyme MnmG from Exiguobacterium sibiricum (strain DSM 17290 / CCUG 55495 / CIP 109462 / JCM 13490 / 255-15).